The sequence spans 617 residues: Guanylate cyclase soluble subunit beta-2 (617 aa).

Residue His-26 participates in heme binding. A Guanylate cyclase domain is found at 391 to 519; that stretch reads TILFSDVVTF…DTVNTASRME (129 aa). Positions 577–586 are enriched in basic and acidic residues; that stretch reads RSKTPVDHKG. The tract at residues 577 to 605 is disordered; sequence RSKTPVDHKGSTQKASLPTTKLQGSVQPS. The span at 588-604 shows a compositional bias: polar residues; the sequence is TQKASLPTTKLQGSVQP.

Belongs to the adenylyl cyclase class-4/guanylyl cyclase family. As to quaternary structure, heterodimer of an alpha and a beta chain. Requires heme as cofactor. Expressed in gastric signet ring cell carcinoma, but not in the normal stomach.

It localises to the cytoplasm. It catalyses the reaction GTP = 3',5'-cyclic GMP + diphosphate. Its activity is regulated as follows. Activated by nitric oxide in the presence of magnesium or manganese ions. The chain is Guanylate cyclase soluble subunit beta-2 (GUCY1B2) from Homo sapiens (Human).